A 371-amino-acid polypeptide reads, in one-letter code: MSIDDKVRAIVKEFKAYVPGKSKEEIARNYGIDPEKIIKLGSNENPWGCSPKIAEKLMDEVSKLHQYPQPINPELMEEISKFTKMPVENIIVGGDGADEVIDNIMRILIDEDDEVIIPIPTFTQYAISAKIHGANIKWAKFDEENGFKLDAESVLNNITEKTKAIFLCTPNNPTGNVIPTEDIKKIVESTDALVMIDHAYIEYSKEEYDLTNWALKYDNVLVLRTFSKVFGLAGQRVGYGVTSKKLVDYMMRIKPIFSLTRASQVSAITALQDKEFFKKCLKEGIESREEIYNGLKKFKQLEVYPTEANYMLVKVKNGMNSSEFCEALLKKGVIVRDCYSFEGLEPYYFRVSIGTFEENERFLKIMSEIVE.

Lys-228 is subject to N6-(pyridoxal phosphate)lysine.

It belongs to the class-II pyridoxal-phosphate-dependent aminotransferase family. Histidinol-phosphate aminotransferase subfamily. It depends on pyridoxal 5'-phosphate as a cofactor.

It catalyses the reaction L-histidinol phosphate + 2-oxoglutarate = 3-(imidazol-4-yl)-2-oxopropyl phosphate + L-glutamate. It participates in amino-acid biosynthesis; L-histidine biosynthesis; L-histidine from 5-phospho-alpha-D-ribose 1-diphosphate: step 7/9. The protein is Histidinol-phosphate aminotransferase of Methanococcus maripaludis (strain C6 / ATCC BAA-1332).